The sequence spans 134 residues: Proline-rich protein 4 (134 aa).

The N-terminal stretch at 1–16 (MLLVLLSVVLLALSSA) is a signal peptide. A disordered region spans residues 28–134 (FTFTIPDVED…ARHPQEQPLW (107 aa)). The segment covering 47–59 (QRPPPEGLLPRPP) has biased composition (pro residues). A compositionally biased stretch (polar residues) spans 110 to 119 (VSLQEASSFF). A compositionally biased stretch (basic and acidic residues) spans 120-134 (QRDRPARHPQEQPLW).

Abundantly expressed in lacrimal gland where it is found in the acinar cells but not in the intralobular ducts. Also found in the submandibular gland, the parotid and sublingual glands.

It localises to the secreted. This chain is Proline-rich protein 4 (PRR4), found in Homo sapiens (Human).